The following is a 173-amino-acid chain: 16S rRNA aminocarboxypropyltransferase (173 aa).

Thr-25, Leu-72, Leu-96, and Ser-115 together coordinate S-adenosyl-L-methionine.

Belongs to the TDD superfamily. TSR3 family.

The protein localises to the cytoplasm. It catalyses the reaction an N(1)-methylpseudouridine in rRNA + S-adenosyl-L-methionine = N(1)-methyl-N(3)-[(3S)-3-amino-3-carboxypropyl]pseudouridine in rRNA + S-methyl-5'-thioadenosine + H(+). Aminocarboxypropyltransferase that catalyzes the aminocarboxypropyl transfer on pseudouridine corresponding to position 914 in M.jannaschii 16S rRNA. It constitutes the last step in biosynthesis of the hypermodified N1-methyl-N3-(3-amino-3-carboxypropyl) pseudouridine (m1acp3-Psi). The protein is 16S rRNA aminocarboxypropyltransferase of Methanosarcina mazei (strain ATCC BAA-159 / DSM 3647 / Goe1 / Go1 / JCM 11833 / OCM 88) (Methanosarcina frisia).